Reading from the N-terminus, the 89-residue chain is Small ribosomal subunit protein uS15 (89 aa).

It belongs to the universal ribosomal protein uS15 family. As to quaternary structure, part of the 30S ribosomal subunit. Forms a bridge to the 50S subunit in the 70S ribosome, contacting the 23S rRNA.

Its function is as follows. One of the primary rRNA binding proteins, it binds directly to 16S rRNA where it helps nucleate assembly of the platform of the 30S subunit by binding and bridging several RNA helices of the 16S rRNA. Functionally, forms an intersubunit bridge (bridge B4) with the 23S rRNA of the 50S subunit in the ribosome. The polypeptide is Small ribosomal subunit protein uS15 (Elusimicrobium minutum (strain Pei191)).